A 619-amino-acid polypeptide reads, in one-letter code: ATP-dependent zinc metalloprotease FtsH (619 aa).

Topologically, residues 1–11 (MSNTDPQPPQK) are cytoplasmic. A helical transmembrane segment spans residues 12-32 (LPLNWVVWTLAVALMLYYLPA). Topologically, residues 33–120 (MRDRPEPAIK…EVKEGHDASS (88 aa)) are periplasmic. A helical membrane pass occupies residues 121-141 (SKVILLSYLPWIMFMIILFWL). Over 142-619 (SRRTFRNFSG…IDECLQTGAS (478 aa)) the chain is Cytoplasmic. ATP is bound at residue 216–223 (GPPGTGKT). His-437 serves as a coordination point for Zn(2+). The active site involves Glu-438. 2 residues coordinate Zn(2+): His-441 and Asp-513.

The protein in the central section; belongs to the AAA ATPase family. In the C-terminal section; belongs to the peptidase M41 family. Homohexamer. Requires Zn(2+) as cofactor.

The protein localises to the cell inner membrane. Its function is as follows. Acts as a processive, ATP-dependent zinc metallopeptidase for both cytoplasmic and membrane proteins. Plays a role in the quality control of integral membrane proteins. The polypeptide is ATP-dependent zinc metalloprotease FtsH (Hahella chejuensis (strain KCTC 2396)).